Consider the following 615-residue polypeptide: Chaperone protein DnaK (615 aa).

T195 bears the Phosphothreonine; by autocatalysis mark. Residues 592-615 (EKGAQAASGKGPDDVIDADYKPAD) are disordered.

The protein belongs to the heat shock protein 70 family.

In terms of biological role, acts as a chaperone. This is Chaperone protein DnaK from Thermus thermophilus (strain ATCC BAA-163 / DSM 7039 / HB27).